The chain runs to 146 residues: Stress enhanced protein 1, chloroplastic (146 aa).

Residues 1–73 constitute a chloroplast transit peptide; that stretch reads MALSQVSASL…GNRAASVSIR (73 aa). The next 2 membrane-spanning stretches (helical) occupy residues 84–104 and 120–140; these read LDIWLGRGAMVGFAVAITVEI and LPTVALAVTALVGVLAAVFIF.

Belongs to the ELIP/psbS family.

The protein resides in the plastid. The protein localises to the chloroplast thylakoid membrane. May be involved in non-photochemical quenching, a process that maintains the balance between dissipation and utilization of light energy to minimize generation of oxidizing molecules, thereby protecting the plant against photo-oxidative damage. May play a photoprotective role in the thylakoid membrane in response to light stress. In Arabidopsis thaliana (Mouse-ear cress), this protein is Stress enhanced protein 1, chloroplastic.